A 277-amino-acid polypeptide reads, in one-letter code: Large ribosomal subunit protein uL2 (277 aa).

Disordered regions lie at residues 36-58 (PLHK…GGGH) and 219-277 (TVRG…RKNK). Positions 258–277 (KTRKKKNKSDKFIVRRRKNK) are enriched in basic residues.

This sequence belongs to the universal ribosomal protein uL2 family. Part of the 50S ribosomal subunit. Forms a bridge to the 30S subunit in the 70S ribosome.

Functionally, one of the primary rRNA binding proteins. Required for association of the 30S and 50S subunits to form the 70S ribosome, for tRNA binding and peptide bond formation. It has been suggested to have peptidyltransferase activity; this is somewhat controversial. Makes several contacts with the 16S rRNA in the 70S ribosome. The sequence is that of Large ribosomal subunit protein uL2 from Bacillus velezensis (strain DSM 23117 / BGSC 10A6 / LMG 26770 / FZB42) (Bacillus amyloliquefaciens subsp. plantarum).